We begin with the raw amino-acid sequence, 386 residues long: CUE domain-containing protein 1 (386 aa).

Low complexity predominate over residues 1-10 (MTSLFRRSSS). A disordered region spans residues 1–40 (MTSLFRRSSSGSGGGGTAGARGGGGGTAAPQELNNSRPAR). Gly residues predominate over residues 11-27 (GSGGGGTAGARGGGGGT). Residues 46-89 (EFNQAMDDFKTMFPNMDYDIIECVLRANSGAVDATIDQLLQMNL) enclose the CUE domain. Disordered stretches follow at residues 147–172 (LAPP…RYRN), 195–225 (SIQG…DQES), and 367–386 (DFRG…REGQ). The span at 199–209 (NAGGPKPGSGE) shows a compositional bias: gly residues.

This Homo sapiens (Human) protein is CUE domain-containing protein 1 (CUEDC1).